The following is a 283-amino-acid chain: ATP synthase gamma chain (283 aa).

The protein belongs to the ATPase gamma chain family. In terms of assembly, F-type ATPases have 2 components, CF(1) - the catalytic core - and CF(0) - the membrane proton channel. CF(1) has five subunits: alpha(3), beta(3), gamma(1), delta(1), epsilon(1). CF(0) has three main subunits: a, b and c.

The protein localises to the cell membrane. Functionally, produces ATP from ADP in the presence of a proton gradient across the membrane. The gamma chain is believed to be important in regulating ATPase activity and the flow of protons through the CF(0) complex. In Clostridium perfringens (strain ATCC 13124 / DSM 756 / JCM 1290 / NCIMB 6125 / NCTC 8237 / Type A), this protein is ATP synthase gamma chain.